A 145-amino-acid chain; its full sequence is Leptin (145 aa).

Cysteines 95 and 145 form a disulfide.

The protein belongs to the leptin family.

Its subcellular location is the secreted. Its function is as follows. Key player in the regulation of energy balance and body weight control. Once released into the circulation, has central and peripheral effects by binding LEPR, found in many tissues, which results in the activation of several major signaling pathways. The protein is Leptin (LEP) of Meleagris gallopavo (Wild turkey).